Consider the following 344-residue polypeptide: Flavonoid 7-O-methyltransferase 1A (344 aa).

Aspartate 211 is a binding site for S-adenosyl-L-methionine. Catalysis depends on histidine 249, which acts as the Proton acceptor.

It belongs to the class I-like SAM-binding methyltransferase superfamily. Cation-independent O-methyltransferase family. Homodimer.

It carries out the reaction apigenin + S-adenosyl-L-methionine = genkwanin + S-adenosyl-L-homocysteine + H(+). The enzyme catalyses luteolin + S-adenosyl-L-methionine = luteolin 7-methyl ether + S-adenosyl-L-homocysteine + H(+). It catalyses the reaction quercetin + S-adenosyl-L-methionine = rhamnetin + S-adenosyl-L-homocysteine + H(+). The catalysed reaction is (2S)-naringenin + S-adenosyl-L-methionine = (2S)-sakuranetin + S-adenosyl-L-homocysteine + H(+). It carries out the reaction kaempferol + S-adenosyl-L-methionine = kaempferol 7-methyl ether + S-adenosyl-L-homocysteine + H(+). The enzyme catalyses isorhamnetin + S-adenosyl-L-methionine = rhamnacene + S-adenosyl-L-homocysteine + H(+). It catalyses the reaction 4',7,8-trihydroxyflavone + S-adenosyl-L-methionine = 4',8-dihydroxy-7-methoxyflavone + S-adenosyl-L-homocysteine. The catalysed reaction is scutellarein + S-adenosyl-L-methionine = scutellarein 7-methyl ether + S-adenosyl-L-homocysteine. It participates in flavonoid metabolism. Functionally, flavonoid 7-O-methyltransferase involved in the biosynthesis of polymethoxylated flavonoids natural products such as pebrellin, aroma compounds which contribute to the flavor of peppermint, and exhibit pharmacological activities such as anti-allergic, anti-oxidant, antibacterial, anti-proliferative, and anti-inflammatory effects. Catalyzes S-adenosylmethionine-dependent regioselective 7-O-methylation of flavonoids; active on various hydroxylated flavonoid substrates, including luteolin (LUT), quercetin, kaempferol, isorhamnetin, apigenin (API), scutellarein (6-hydroxy-apigenin, 6-OH-API, SCU), 7,8,4'-trihydroxy-flavone and naringenin (NAR), and, with a lower efficiency, 7,8,3',4'-tetrahydroxy-flavone, taxifolin, hesperetin and genistein. The chain is Flavonoid 7-O-methyltransferase 1A from Mentha piperita (Peppermint).